The chain runs to 492 residues: Prenylcysteine oxidase 1-like (492 aa).

Residues 1–21 (MAHAARLLAALAALLAAAATG) form the signal peptide. An N-linked (GlcNAc...) asparagine glycan is attached at asparagine 340.

It belongs to the prenylcysteine oxidase family. FAD serves as cofactor.

The protein resides in the secreted. Functionally, likely to have oxidoreductase activity. Required in the mevalonate pathway to regulate prenylation and enhances the bactericidal activity of neutrophils. In Bos taurus (Bovine), this protein is Prenylcysteine oxidase 1-like (PCYOX1L).